A 420-amino-acid chain; its full sequence is Protein maelstrom homolog (420 aa).

Residues R4–E73 constitute a DNA-binding region (HMG box). 3 disordered regions span residues R62 to V94, G341 to S372, and N392 to S420. 2 stretches are compositionally biased toward polar residues: residues H344–T358 and N392–T407.

Belongs to the maelstrom family. Interacts with SMARCB1, SIN3B and DDX4. Interacts with piRNA-associated proteins TDRD1, PIWIL1 and PIWIL2. Interacts with TEX19.

It localises to the cytoplasm. The protein resides in the nucleus. Its function is as follows. Plays a central role during spermatogenesis by repressing transposable elements and preventing their mobilization, which is essential for the germline integrity. Acts via the piRNA metabolic process, which mediates the repression of transposable elements during meiosis by forming complexes composed of piRNAs and Piwi proteins and governs the methylation and subsequent repression of transposons. Its association with piP-bodies suggests a participation in the secondary piRNAs metabolic process. Required for the localization of germ-cell factors to the meiotic nuage. The sequence is that of Protein maelstrom homolog (MAEL) from Bos taurus (Bovine).